Consider the following 270-residue polypeptide: MSERKVLNKYIPPDYDPSIRPPKKKKKFQGPNGGKLTVRLMTPFSMRCHTCGEYIYKGKKFNARKEKTGEKYFSIDILRFYIRCTRCAAEITFITDPKHADYAAESGASRNYEPWHEKRLQEYEENELAERNDIPEEDEMEKLEQKTLDTKRQMQISDALDELREKSARRSRVNIDDAIALLKEDAYGSIEEEESKKRKFEEEEIDREAKSLFSSQDGEIIRRLNAETTVEKELPKPIDLVSEKLATSNIPNFQPPKYAKRKMEKKKVLV.

Residues 1–32 are disordered; the sequence is MSERKVLNKYIPPDYDPSIRPPKKKKKFQGPN. 4 residues coordinate Zn(2+): Cys-48, Cys-51, Cys-84, and Cys-87. The segment at 251-270 is disordered; that stretch reads PNFQPPKYAKRKMEKKKVLV. A compositionally biased stretch (basic residues) spans 258 to 270; the sequence is YAKRKMEKKKVLV.

The protein belongs to the CWC16 family. YJU2 subfamily. Component of the spliceosome. Present in the activated B complex, the catalytically activated B* complex which catalyzes the branching, the catalytic step 1 C complex catalyzing the exon ligation, and the postcatalytic P complex containing the ligated exons (mRNA) and the excised lariat intron. Belongs to the 40S cdc5-associated complex (or cwf complex), a spliceosome sub-complex reminiscent of a late-stage spliceosome composed of the U2, U5 and U6 snRNAs and at least brr2, cdc5, cwf2/prp3, cwf3/syf1, cwf4/syf3, cwf5/ecm2, spp42/cwf6, cwf7/spf27, cwf8, cwf9, cwf10, cwf11, cwf12, prp45/cwf13, cwf14, cwf15, cwf16, cwf17, cwf18, cwf19, cwf20, cwf21, cwf22, cwf23, cwf24, cwf25, cwf26, cyp7/cwf27, cwf28, cwf29/ist3, lea1, msl1, prp5/cwf1, prp10, prp12/sap130, prp17, prp22, sap61, sap62, sap114, sap145, slu7, smb1, smd1, smd3, smf1, smg1 and syf2.

It localises to the nucleus. In terms of biological role, part of the spliceosome which catalyzes two sequential transesterification reactions, first the excision of the non-coding intron from pre-mRNA and then the ligation of the coding exons to form the mature mRNA. Plays a role in stabilizing the structure of the spliceosome catalytic core and docking of the branch helix into the active site, producing 5'-exon and lariat intron-3'-intermediates. The sequence is that of Splicing factor YJU2 (cwf16) from Schizosaccharomyces pombe (strain 972 / ATCC 24843) (Fission yeast).